The primary structure comprises 217 residues: Protein LURP-one-related 15 (217 aa).

The residue at position 1 (Met-1) is an N-acetylmethionine.

Belongs to the LOR family.

In terms of biological role, might be related to the phospholipid scramblase and tubby-like superfamily of membrane tethered transcription factors. The polypeptide is Protein LURP-one-related 15 (Arabidopsis thaliana (Mouse-ear cress)).